Reading from the N-terminus, the 263-residue chain is 4-hydroxy-tetrahydrodipicolinate reductase (263 aa).

NAD(+) is bound at residue 10–15 (GASGKM). Arginine 38 lines the NADP(+) pocket. Residues 97-99 (GTT) and 123-126 (APNF) each bind NAD(+). Histidine 153 serves as the catalytic Proton donor/acceptor. Histidine 154 provides a ligand contact to (S)-2,3,4,5-tetrahydrodipicolinate. The active-site Proton donor is lysine 157. Position 163–164 (163–164 (GT)) interacts with (S)-2,3,4,5-tetrahydrodipicolinate.

Belongs to the DapB family.

It is found in the cytoplasm. The enzyme catalyses (S)-2,3,4,5-tetrahydrodipicolinate + NAD(+) + H2O = (2S,4S)-4-hydroxy-2,3,4,5-tetrahydrodipicolinate + NADH + H(+). It carries out the reaction (S)-2,3,4,5-tetrahydrodipicolinate + NADP(+) + H2O = (2S,4S)-4-hydroxy-2,3,4,5-tetrahydrodipicolinate + NADPH + H(+). It participates in amino-acid biosynthesis; L-lysine biosynthesis via DAP pathway; (S)-tetrahydrodipicolinate from L-aspartate: step 4/4. Functionally, catalyzes the conversion of 4-hydroxy-tetrahydrodipicolinate (HTPA) to tetrahydrodipicolinate. The chain is 4-hydroxy-tetrahydrodipicolinate reductase from Dehalococcoides mccartyi (strain CBDB1).